A 185-amino-acid polypeptide reads, in one-letter code: Ribosome-recycling factor (185 aa).

It belongs to the RRF family.

It is found in the cytoplasm. Its function is as follows. Responsible for the release of ribosomes from messenger RNA at the termination of protein biosynthesis. May increase the efficiency of translation by recycling ribosomes from one round of translation to another. This is Ribosome-recycling factor from Laribacter hongkongensis (strain HLHK9).